Consider the following 113-residue polypeptide: Carrot ABA-induced in somatic embryos 3 (113 aa).

3 stretches are compositionally biased toward basic and acidic residues: residues 1-17 (MASG…RAKQ), 32-52 (EAQE…KEQL), and 65-77 (GETR…KEGY). The segment at 1–113 (MASGQEKRSE…IDQSKFRTKS (113 aa)) is disordered.

The protein belongs to the small hydrophilic plant seed protein family. Expressed in embryogenic cells, somatic embryos and seeds at the later stages of development. Not detected in leaves.

This Daucus carota (Wild carrot) protein is Carrot ABA-induced in somatic embryos 3.